The sequence spans 132 residues: Small ribosomal subunit protein uS8c (132 aa).

It belongs to the universal ribosomal protein uS8 family. In terms of assembly, part of the 30S ribosomal subunit.

Its subcellular location is the plastid. It is found in the chloroplast. Its function is as follows. One of the primary rRNA binding proteins, it binds directly to 16S rRNA central domain where it helps coordinate assembly of the platform of the 30S subunit. The sequence is that of Small ribosomal subunit protein uS8c (rps8) from Acorus calamus (Sweet flag).